A 1359-amino-acid chain; its full sequence is Probable protein NAP1 (1359 aa).

The tract at residues 1267–1359 (PSMKQNRADT…VSRSGPLSYK (93 aa)) is disordered. Composition is skewed to basic and acidic residues over residues 1272 to 1282 (NRADTTPRSHT) and 1300 to 1310 (EGDRRTGERQL).

Belongs to the HEM-1/HEM-2 family. As to quaternary structure, binds PIR.

Involved in regulation of actin and microtubule organization. Part of a WAVE complex that activates the Arp2/3 complex. The polypeptide is Probable protein NAP1 (NAP1) (Oryza sativa subsp. japonica (Rice)).